The primary structure comprises 462 residues: ATP synthase subunit beta (462 aa).

An ATP-binding site is contributed by 151 to 158; that stretch reads GGAGVGKT.

This sequence belongs to the ATPase alpha/beta chains family. In terms of assembly, F-type ATPases have 2 components, CF(1) - the catalytic core - and CF(0) - the membrane proton channel. CF(1) has five subunits: alpha(3), beta(3), gamma(1), delta(1), epsilon(1). CF(0) has four main subunits: a(1), b(1), b'(1) and c(9-12).

It localises to the cell inner membrane. It carries out the reaction ATP + H2O + 4 H(+)(in) = ADP + phosphate + 5 H(+)(out). Functionally, produces ATP from ADP in the presence of a proton gradient across the membrane. The catalytic sites are hosted primarily by the beta subunits. The chain is ATP synthase subunit beta from Chlorobium phaeobacteroides (strain BS1).